We begin with the raw amino-acid sequence, 37 residues long: Large ribosomal subunit protein bL36 (37 aa).

Belongs to the bacterial ribosomal protein bL36 family.

In Nocardia farcinica (strain IFM 10152), this protein is Large ribosomal subunit protein bL36.